The following is a 630-amino-acid chain: Adenine DNA glycosylase (630 aa).

Positions 54-72 (MRKCREKKEAEREAEREAE) are enriched in basic and acidic residues. The interval 54-123 (MRKCREKKEA…ALGGDIEDLF (70 aa)) is disordered. Over residues 73-123 (REAEEEEKAEEAEAEADKEEAEEESEEEEEEEEEEAEAEEEALGGDIEDLF) the composition is skewed to acidic residues. E168 acts as the Proton donor/acceptor in catalysis. C341, C348, C351, and C357 together coordinate [4Fe-4S] cluster. One can recognise a Nudix hydrolase domain in the interval 383 to 536 (PRHDFCCVCV…RKVPPFRLQH (154 aa)). The Nudix box signature appears at 427-451 (VILNEEADSATRRNAINVYLKEAFR).

This sequence belongs to the Nth/MutY family. Requires [4Fe-4S] cluster as cofactor.

It localises to the nucleus. It catalyses the reaction Hydrolyzes free adenine bases from 7,8-dihydro-8-oxoguanine:adenine mismatched double-stranded DNA, leaving an apurinic site.. Functionally, involved in oxidative DNA damage repair. Initiates repair of A*oxoG to C*G by removing the inappropriately paired adenine base from the DNA backbone. Possesses both adenine and 2-OH-A DNA glycosylase activities. In Arabidopsis thaliana (Mouse-ear cress), this protein is Adenine DNA glycosylase (MYH).